Here is a 732-residue protein sequence, read N- to C-terminus: Protein kinase YpkA (732 aa).

The region spanning Val-136–Leu-408 is the Protein kinase domain. ATP contacts are provided by residues Phe-142 to Ser-150 and Lys-163. Asp-270 acts as the Proton acceptor in catalysis.

It belongs to the protein kinase superfamily. Ser/Thr protein kinase family.

It localises to the secreted. It carries out the reaction L-seryl-[protein] + ATP = O-phospho-L-seryl-[protein] + ADP + H(+). The enzyme catalyses L-threonyl-[protein] + ATP = O-phospho-L-threonyl-[protein] + ADP + H(+). Its function is as follows. Acts as a virulence determinant. The chain is Protein kinase YpkA (ypkA) from Yersinia pseudotuberculosis serotype I (strain IP32953).